The primary structure comprises 752 residues: Translation initiation factor IF-2 (752 aa).

A compositionally biased stretch (basic and acidic residues) spans 148–159; the sequence is KKVKDKNKKEEP. The disordered stretch occupies residues 148-170; sequence KKVKDKNKKEEPAVTPSTAPRKK. The tr-type G domain maps to 250-419; that stretch reads PRPPIVTVMG…ALQAEIMELK (170 aa). The tract at residues 259–266 is G1; it reads GHVDHGKT. Residue 259-266 coordinates GTP; sequence GHVDHGKT. The G2 stretch occupies residues 284–288; sequence GITQH. Positions 305–308 are G3; it reads DTPG. GTP-binding positions include 305-309 and 359-362; these read DTPGH and NKID. The tract at residues 359–362 is G4; it reads NKID. The segment at 395 to 397 is G5; the sequence is SAK.

Belongs to the TRAFAC class translation factor GTPase superfamily. Classic translation factor GTPase family. IF-2 subfamily.

It is found in the cytoplasm. In terms of biological role, one of the essential components for the initiation of protein synthesis. Protects formylmethionyl-tRNA from spontaneous hydrolysis and promotes its binding to the 30S ribosomal subunits. Also involved in the hydrolysis of GTP during the formation of the 70S ribosomal complex. The chain is Translation initiation factor IF-2 from Thermodesulfovibrio yellowstonii (strain ATCC 51303 / DSM 11347 / YP87).